A 448-amino-acid chain; its full sequence is Probable glycine dehydrogenase (decarboxylating) subunit 1 (448 aa).

It belongs to the GcvP family. N-terminal subunit subfamily. In terms of assembly, the glycine cleavage system is composed of four proteins: P, T, L and H. In this organism, the P 'protein' is a heterodimer of two subunits.

The enzyme catalyses N(6)-[(R)-lipoyl]-L-lysyl-[glycine-cleavage complex H protein] + glycine + H(+) = N(6)-[(R)-S(8)-aminomethyldihydrolipoyl]-L-lysyl-[glycine-cleavage complex H protein] + CO2. In terms of biological role, the glycine cleavage system catalyzes the degradation of glycine. The P protein binds the alpha-amino group of glycine through its pyridoxal phosphate cofactor; CO(2) is released and the remaining methylamine moiety is then transferred to the lipoamide cofactor of the H protein. The protein is Probable glycine dehydrogenase (decarboxylating) subunit 1 of Staphylococcus aureus (strain USA300).